Consider the following 360-residue polypeptide: Acetylxylan esterase / glucomannan deacetylase (360 aa).

The signal sequence occupies residues 1–21 (MKPHALIGLLAGMLLSSSLYA). The Nucleophile role is filled by Ser151.

It belongs to the carbohydrate esterase 2 (CE2) family.

It is found in the secreted. The catalysed reaction is Deacetylation of xylans and xylo-oligosaccharides.. It participates in glycan degradation; xylan degradation. In terms of biological role, involved in the degradation of plant cell wall polysaccharides. Catalyzes the deacetylation of acetylated birchwood xylan and glucomannan, with a large preference for the latter, and of the synthetic substrate 4-nitrophenyl acetate (4-NPAc). The protein is Acetylxylan esterase / glucomannan deacetylase of Cellvibrio japonicus (strain Ueda107) (Pseudomonas fluorescens subsp. cellulosa).